Reading from the N-terminus, the 398-residue chain is Flavin-containing monooxygenase ustF1 (398 aa).

Positions 1–22 (MTVSQVRRVAVIGAGISGVVST) are cleaved as a signal peptide. FAD is bound at residue 13-18 (GAGISG). Residues N53, N57, N119, and N126 are each glycosylated (N-linked (GlcNAc...) asparagine). Residue 194–199 (GGGVSS) coordinates NADP(+). N-linked (GlcNAc...) asparagine glycosylation is found at N236, N243, and N271.

Belongs to the FMO family.

It participates in mycotoxin biosynthesis. Functionally, flavin-containing monooxygenase; part of the gene cluster that mediates the biosynthesis of the secondary metabolite ustiloxin B, an antimitotic tetrapeptide. First, ustA is processed by the subtilisin-like endoprotease Kex2 that is outside the ustiloxin B gene cluster, at the C-terminal side of Arg-Lys, after transfer to Golgi apparatus through the endoplasmic reticulum (ER). Cleavage by KEX2 generates 16 peptides YAIG-I to YAIG-XVI. To process the precursor peptide further, at least two peptidases are necessary to cleave the N-terminal and C-terminal sides of the Tyr-Ala-Ile-Gly core peptide which serves as backbone for the synthesis of ustiloxin B, through cyclization and modification of the tyrosine with a non-protein coding amino acid, norvaline. One of the two peptidases must be the serine peptidase ustP; and the other pepdidase is probably ustH. Macrocyclization of the core peptide derived from ustA requires the tyrosinase ustQ, as well as the homologous oxidases ustYa and ustYb, and leads to the production of the first cyclization product N-desmethylustiloxin F. For the formation of N-desmethylustiloxin F, three oxidation steps are required, hydroxylation at the benzylic position, hydroxylation at either the aromatic ring of Tyr or beta-position of Ile, and oxidative cyclization. UstQ may catalyze the oxidation of a phenol moiety, whereas the ustYa and ustYb are most likely responsible for the remaining two-step oxidations. N-desmethylustiloxin F is then methylated by ustM to yield ustiloxin F which in turn substrate of the cytochrome P450 monooxygenase ustC which catalyzes the formation of S-deoxyustiloxin H. The flavoprotein monooxygenases ustF1 and ustF2 then participate in the modification of the side chain of S-deoxyustiloxin H, leading to the synthesis of an oxime intermediate, via ustiloxin H. Finally, carboxylative dehydration performed by the cysteine desulfurase-like protein ustD yields ustiloxin B. The protein is Flavin-containing monooxygenase ustF1 of Aspergillus flavus (strain ATCC 200026 / FGSC A1120 / IAM 13836 / NRRL 3357 / JCM 12722 / SRRC 167).